Here is a 427-residue protein sequence, read N- to C-terminus: Stabilizer of axonemal microtubules 4 (427 aa).

Disordered stretches follow at residues 82–105 (TSKS…PLPW), 273–298 (RTLN…QPPQ), and 314–335 (GNKE…SYEQ). 2 stretches are compositionally biased toward polar residues: residues 287-298 (ASMSHRSYQPPQ) and 321-332 (FTLNNPSYVRSS).

Microtubule inner protein component of sperm flagellar doublet microtubules. Interacts with PPP1CA.

The protein resides in the cell projection. It is found in the cilium. Its subcellular location is the cytoplasm. The protein localises to the cytoskeleton. It localises to the flagellum axoneme. In Mus musculus (Mouse), this protein is Stabilizer of axonemal microtubules 4.